The primary structure comprises 1184 residues: DNA-directed RNA polymerase subunit beta' (1184 aa).

Zn(2+) is bound by residues Cys60, Cys62, Cys75, and Cys78. Asp449, Asp451, and Asp453 together coordinate Mg(2+). Residues Cys794, Cys867, Cys874, and Cys877 each contribute to the Zn(2+) site.

The protein belongs to the RNA polymerase beta' chain family. In terms of assembly, the RNAP catalytic core consists of 2 alpha, 1 beta, 1 beta' and 1 omega subunit. When a sigma factor is associated with the core the holoenzyme is formed, which can initiate transcription. The cofactor is Mg(2+). It depends on Zn(2+) as a cofactor.

The catalysed reaction is RNA(n) + a ribonucleoside 5'-triphosphate = RNA(n+1) + diphosphate. Functionally, DNA-dependent RNA polymerase catalyzes the transcription of DNA into RNA using the four ribonucleoside triphosphates as substrates. The chain is DNA-directed RNA polymerase subunit beta' from Thermoanaerobacter sp. (strain X514).